Here is a 133-residue protein sequence, read N- to C-terminus: CDGSH iron-sulfur domain-containing protein 2 homolog (133 aa).

Over 1–35 (MEPISHLVKSSLPNYLSSLPIPDSIGGWFKLSFKD) the chain is Lumenal. The helical transmembrane segment at 36–58 (WLALIPPTVVVAGLGYTAYLAYC) threads the bilayer. Residues 59-133 (PAAQGSCSAK…DNVGPIVIKK (75 aa)) lie on the Cytoplasmic side of the membrane. 4 residues coordinate [2Fe-2S] cluster: C100, C102, C111, and H115.

Belongs to the CISD protein family. CISD2 subfamily. The cofactor is [2Fe-2S] cluster.

It localises to the endoplasmic reticulum membrane. The chain is CDGSH iron-sulfur domain-containing protein 2 homolog from Drosophila erecta (Fruit fly).